Here is a 319-residue protein sequence, read N- to C-terminus: Aliphatic sulfonates import ATP-binding protein SsuB 1 (319 aa).

The ABC transporter domain occupies 63–282 (VTLSGVSKRF…ARASAAFAAL (220 aa)). 95-102 (GRSGCGKS) is a binding site for ATP.

It belongs to the ABC transporter superfamily. Aliphatic sulfonates importer (TC 3.A.1.17.2) family. In terms of assembly, the complex is composed of two ATP-binding proteins (SsuB), two transmembrane proteins (SsuC) and a solute-binding protein (SsuA).

It localises to the cell inner membrane. It catalyses the reaction ATP + H2O + aliphatic sulfonate-[sulfonate-binding protein]Side 1 = ADP + phosphate + aliphatic sulfonateSide 2 + [sulfonate-binding protein]Side 1.. Functionally, part of the ABC transporter complex SsuABC involved in aliphatic sulfonates import. Responsible for energy coupling to the transport system. This is Aliphatic sulfonates import ATP-binding protein SsuB 1 from Burkholderia cenocepacia (strain HI2424).